The sequence spans 962 residues: SH3 domain-binding protein 4 (962 aa).

Residues 55 to 114 (GNAKEVIAIKDYCPNNFTTLKFSKGDHLYVLDTSGGEWWYAHNTTEMGYIPSSYVQPLNY) form the SH3 1 domain. 5 positions are modified to phosphoserine: Ser131, Ser245, Ser250, Ser278, and Ser295. Residues 316–453 (TNIVCKLDSS…LEPCMYLAIV (138 aa)) enclose the ZU5 domain. Ser636 is subject to Phosphoserine. Residues 653–723 (SSLKFGKLLK…HTKNVLVVGK (71 aa)) enclose the SH3 2 domain.

In terms of assembly, homodimer or homooligomer. Interacts with DNM2, EPS15, clathrin, the adapter protein complex 2/AP-2 and TFRC. Interacts with the Rag GTPases RRAGA, RRAGB, RRAGC and RRAGD; the interaction is most probably direct, preferentially occurs with their inactive GDP-bound form and is negatively regulated by amino acids. Phosphorylated upon EGF stimulation. Phosphorylation prevents interaction with DNM2.

The protein localises to the membrane. The protein resides in the clathrin-coated pit. It localises to the cytoplasmic vesicle. It is found in the clathrin-coated vesicle. Its subcellular location is the nucleus. In terms of biological role, may function in transferrin receptor internalization at the plasma membrane through a cargo-specific control of clathrin-mediated endocytosis. Alternatively, may act as a negative regulator of the amino acid-induced TOR signaling by inhibiting the formation of active Rag GTPase complexes. Preferentially binds inactive Rag GTPase complexes and prevents their interaction with the mTORC1 complex inhibiting its relocalization to lysosomes and its activation. Thereby, may indirectly regulate cell growth, proliferation and autophagy. This is SH3 domain-binding protein 4 (Sh3bp4) from Mus musculus (Mouse).